A 694-amino-acid polypeptide reads, in one-letter code: Elongation factor G (694 aa).

In terms of domain architecture, tr-type G spans 9 to 288 (SKIRNIGIMA…VIVKWLPSPK (280 aa)). GTP is bound by residues 18 to 25 (AHIDAGKT), 82 to 86 (DTPGH), and 136 to 139 (NKMD).

Belongs to the TRAFAC class translation factor GTPase superfamily. Classic translation factor GTPase family. EF-G/EF-2 subfamily.

Its subcellular location is the cytoplasm. In terms of biological role, catalyzes the GTP-dependent ribosomal translocation step during translation elongation. During this step, the ribosome changes from the pre-translocational (PRE) to the post-translocational (POST) state as the newly formed A-site-bound peptidyl-tRNA and P-site-bound deacylated tRNA move to the P and E sites, respectively. Catalyzes the coordinated movement of the two tRNA molecules, the mRNA and conformational changes in the ribosome. The protein is Elongation factor G of Chlamydia caviae (strain ATCC VR-813 / DSM 19441 / 03DC25 / GPIC) (Chlamydophila caviae).